The chain runs to 1045 residues: Pre-mRNA-splicing factor ATP-dependent RNA helicase DHX16 (1045 aa).

A disordered region spans residues 101–211 (EDSEESSEEA…ERSDKKAYEE (111 aa)). Serine 103, serine 106, and serine 107 each carry phosphoserine. A compositionally biased stretch (basic residues) spans 119–131 (QKKRKKRKHLRKK). Positions 135 to 144 (EEEEEEEEEV) are enriched in acidic residues. The residue at position 164 (serine 164) is a Phosphoserine. Basic and acidic residues predominate over residues 170 to 211 (RTERERLQDLEERDAFAERVRQRDKDRTRNVLERSDKKAYEE). The region spanning 413–577 (LAAVANHQIL…FDDAPVFRIP (165 aa)) is the Helicase ATP-binding domain. 426–433 (GETGSGKT) is a binding site for ATP. The short motif at 524-527 (DEAH) is the DEAH box element. The 174-residue stretch at 602–775 (SVLQIHVTQP…NVVLLLKSLG (174 aa)) folds into the Helicase C-terminal domain. Position 716 is a phosphothreonine (threonine 716). The disordered stretch occupies residues 1026–1045 (EDPHAKKMPKKTGKTREELG).

This sequence belongs to the DEAD box helicase family. DEAH subfamily. DDX16/PRP8 sub-subfamily. In terms of assembly, component of pre-catalytic spliceosome complexes. Component of the minor spliceosome, which splices U12-type introns. Interacts with GPKOW. Interacts with TRIM6. Interacts with RIGI.

The protein resides in the nucleus. It localises to the nucleoplasm. The protein localises to the cytoplasm. The catalysed reaction is ATP + H2O = ADP + phosphate + H(+). In terms of biological role, required for pre-mRNA splicing as a component of the spliceosome. Contributes to pre-mRNA splicing after spliceosome formation and prior to the first transesterification reaction. As a component of the minor spliceosome, involved in the splicing of U12-type introns in pre-mRNAs. Also plays a role in innate antiviral response by acting as a pattern recognition receptor sensing splicing signals in viral RNA. Mechanistically, TRIM6 promotes the interaction between unanchored 'Lys-48'-polyubiquitin chains and DHX16, leading to DHX16 interaction with RIGI and ssRNA to amplify RIGI-dependent innate antiviral immune responses. This is Pre-mRNA-splicing factor ATP-dependent RNA helicase DHX16 (DHX16) from Sus scrofa (Pig).